The sequence spans 152 residues: SsrA-binding protein (152 aa).

Belongs to the SmpB family.

It is found in the cytoplasm. Required for rescue of stalled ribosomes mediated by trans-translation. Binds to transfer-messenger RNA (tmRNA), required for stable association of tmRNA with ribosomes. tmRNA and SmpB together mimic tRNA shape, replacing the anticodon stem-loop with SmpB. tmRNA is encoded by the ssrA gene; the 2 termini fold to resemble tRNA(Ala) and it encodes a 'tag peptide', a short internal open reading frame. During trans-translation Ala-aminoacylated tmRNA acts like a tRNA, entering the A-site of stalled ribosomes, displacing the stalled mRNA. The ribosome then switches to translate the ORF on the tmRNA; the nascent peptide is terminated with the 'tag peptide' encoded by the tmRNA and targeted for degradation. The ribosome is freed to recommence translation, which seems to be the essential function of trans-translation. The chain is SsrA-binding protein from Rickettsia felis (strain ATCC VR-1525 / URRWXCal2) (Rickettsia azadi).